We begin with the raw amino-acid sequence, 386 residues long: WD repeat-containing protein 89 (386 aa).

6 WD repeats span residues 21–65, 68–107, 112–156, 167–207, 213–253, and 318–357; these read KEPT…LLRE, GSPG…EKPV, GYPS…QDLS, THSD…EEDA, NSVS…TDEP, and GHAA…KTFT.

The chain is WD repeat-containing protein 89 (Wdr89) from Mus musculus (Mouse).